The sequence spans 181 residues: Oligoribonuclease (181 aa).

One can recognise an Exonuclease domain in the interval 8–171 (LIWLDMEMTG…ADILESIEEM (164 aa)). The active site involves tyrosine 129.

It belongs to the oligoribonuclease family.

It localises to the cytoplasm. Functionally, 3'-to-5' exoribonuclease specific for small oligoribonucleotides. The polypeptide is Oligoribonuclease (Chromobacterium violaceum (strain ATCC 12472 / DSM 30191 / JCM 1249 / CCUG 213 / NBRC 12614 / NCIMB 9131 / NCTC 9757 / MK)).